The following is a 224-amino-acid chain: Small ribosomal subunit protein uS3 (224 aa).

Residues 39–107 enclose the KH type-2 domain; sequence IREFLKKKPS…DVWVEIAEVK (69 aa).

This sequence belongs to the universal ribosomal protein uS3 family. In terms of assembly, part of the 30S ribosomal subunit. Forms a tight complex with proteins S10 and S14.

Binds the lower part of the 30S subunit head. Binds mRNA in the 70S ribosome, positioning it for translation. The chain is Small ribosomal subunit protein uS3 from Chlamydia muridarum (strain MoPn / Nigg).